Reading from the N-terminus, the 329-residue chain is GTP 3',8-cyclase (329 aa).

Residues 8–234 enclose the Radical SAM core domain; that stretch reads AFARKFYYLR…QLRQRSDGPA (227 aa). R17 is a binding site for GTP. [4Fe-4S] cluster-binding residues include C24 and C28. Y30 contacts S-adenosyl-L-methionine. C31 provides a ligand contact to [4Fe-4S] cluster. R68 contacts GTP. G72 lines the S-adenosyl-L-methionine pocket. Position 99 (T99) interacts with GTP. Residue S123 coordinates S-adenosyl-L-methionine. K160 provides a ligand contact to GTP. Residue M194 coordinates S-adenosyl-L-methionine. C257 and C260 together coordinate [4Fe-4S] cluster. Residue 262-264 participates in GTP binding; the sequence is RLR. Residue C274 participates in [4Fe-4S] cluster binding.

It belongs to the radical SAM superfamily. MoaA family. Monomer and homodimer. It depends on [4Fe-4S] cluster as a cofactor.

The catalysed reaction is GTP + AH2 + S-adenosyl-L-methionine = (8S)-3',8-cyclo-7,8-dihydroguanosine 5'-triphosphate + 5'-deoxyadenosine + L-methionine + A + H(+). Its pathway is cofactor biosynthesis; molybdopterin biosynthesis. In terms of biological role, catalyzes the cyclization of GTP to (8S)-3',8-cyclo-7,8-dihydroguanosine 5'-triphosphate. The sequence is that of GTP 3',8-cyclase from Salmonella heidelberg (strain SL476).